The chain runs to 172 residues: RNA pyrophosphohydrolase (172 aa).

The 144-residue stretch at 6–149 (GFRANVGIII…KRDVYRKVMK (144 aa)) folds into the Nudix hydrolase domain. The short motif at 38 to 59 (GGVDEGETPEEAMFRELYEEVG) is the Nudix box element.

It belongs to the Nudix hydrolase family. RppH subfamily. A divalent metal cation is required as a cofactor.

Functionally, accelerates the degradation of transcripts by removing pyrophosphate from the 5'-end of triphosphorylated RNA, leading to a more labile monophosphorylated state that can stimulate subsequent ribonuclease cleavage. The polypeptide is RNA pyrophosphohydrolase (Shewanella sediminis (strain HAW-EB3)).